A 328-amino-acid chain; its full sequence is Ribosomal RNA small subunit methyltransferase H (328 aa).

S-adenosyl-L-methionine contacts are provided by residues glycine 37–histidine 39, aspartate 57, phenylalanine 83, aspartate 104, and glutamine 111.

The protein belongs to the methyltransferase superfamily. RsmH family.

The protein resides in the cytoplasm. The catalysed reaction is cytidine(1402) in 16S rRNA + S-adenosyl-L-methionine = N(4)-methylcytidine(1402) in 16S rRNA + S-adenosyl-L-homocysteine + H(+). Specifically methylates the N4 position of cytidine in position 1402 (C1402) of 16S rRNA. This is Ribosomal RNA small subunit methyltransferase H from Neisseria meningitidis serogroup B (strain ATCC BAA-335 / MC58).